The primary structure comprises 439 residues: ATP-dependent protease ATPase subunit HslU (439 aa).

ATP-binding positions include isoleucine 17, 59-64 (GVGKTE), aspartate 251, glutamate 317, and arginine 389.

The protein belongs to the ClpX chaperone family. HslU subfamily. As to quaternary structure, a double ring-shaped homohexamer of HslV is capped on each side by a ring-shaped HslU homohexamer. The assembly of the HslU/HslV complex is dependent on binding of ATP.

The protein localises to the cytoplasm. Functionally, ATPase subunit of a proteasome-like degradation complex; this subunit has chaperone activity. The binding of ATP and its subsequent hydrolysis by HslU are essential for unfolding of protein substrates subsequently hydrolyzed by HslV. HslU recognizes the N-terminal part of its protein substrates and unfolds these before they are guided to HslV for hydrolysis. The protein is ATP-dependent protease ATPase subunit HslU of Campylobacter jejuni subsp. jejuni serotype O:2 (strain ATCC 700819 / NCTC 11168).